A 473-amino-acid polypeptide reads, in one-letter code: Glutamate--tRNA ligase (473 aa).

Positions 13–23 match the 'HIGH' region motif; the sequence is PSPTGFLHVGG. The 'KMSKS' region motif lies at 240-244; the sequence is KLSKR. Residue lysine 243 coordinates ATP.

Belongs to the class-I aminoacyl-tRNA synthetase family. Glutamate--tRNA ligase type 1 subfamily. In terms of assembly, monomer.

The protein localises to the cytoplasm. It carries out the reaction tRNA(Glu) + L-glutamate + ATP = L-glutamyl-tRNA(Glu) + AMP + diphosphate. Its function is as follows. Catalyzes the attachment of glutamate to tRNA(Glu) in a two-step reaction: glutamate is first activated by ATP to form Glu-AMP and then transferred to the acceptor end of tRNA(Glu). The sequence is that of Glutamate--tRNA ligase from Shewanella denitrificans (strain OS217 / ATCC BAA-1090 / DSM 15013).